Reading from the N-terminus, the 1040-residue chain is Exosome RNA helicase MTR4 (1040 aa).

An N-acetylalanine modification is found at Ala2. The disordered stretch occupies residues 16 to 77; the sequence is DSTSAAGAKK…GTDEPIFGKK (62 aa). A compositionally biased stretch (basic and acidic residues) spans 23-33; it reads AKKDKEKEKWK. Residue Lys24 forms a Glycyl lysine isopeptide (Lys-Gly) (interchain with G-Cter in SUMO2) linkage. Ser38 carries the phosphoserine modification. Residues 41 to 50 show a composition bias toward basic and acidic residues; it reads KAGKRLDTKL. Lys49 and Lys76 each carry N6-acetyllysine. Residues Ile137, 159 to 166, Ser162, Gly164, Lys165, and Thr166 each bind ATP; that span reads AHTSAGKT. In terms of domain architecture, Helicase ATP-binding spans 146-302; that stretch reads IQCVDNNQSV…WICHLHKQPC (157 aa). The DEIH box motif lies at 250–253; sequence DEIH. Lys356 participates in a covalent cross-link: Glycyl lysine isopeptide (Lys-Gly) (interchain with G-Cter in SUMO2). Residues 403 to 575 form the Helicase C-terminal domain; the sequence is QMTKLDFNTD…NMVLNLLRVE (173 aa). Residues Lys682 and Lys721 each participate in a glycyl lysine isopeptide (Lys-Gly) (interchain with G-Cter in SUMO2) cross-link.

Belongs to the helicase family. SKI2 subfamily. Component of a TRAMP-like complex, an ATP-dependent exosome regulatory complex consisting of a helicase (MTREX), an oligadenylate polymerase (TENT4B or TENT4A), and a substrate specific RNA-binding factor (ZCCHC7 or ZCCHC8). Several TRAMP-like complexes exist with specific compositions and are associated with nuclear, or nucleolar RNA exosomes. Identified in the spliceosome C complex. Component of the poly(A) tail exosome targeting (PAXT) complex made of PABPN1, ZFC3H1 and MTREX that directs a subset of long and polyadenylated poly(A) RNAs for exosomal degradation. Component of the nuclear exosome targeting (NEXT) complex composed of MTREX, ZCCHC8, and RBM7 that directs a subset of non-coding short-lived RNAs for exosomal degradation. Interacts with ZCCHC8; this interaction bridges the interaction between RBM7 and MTREX. Binds to ZFC3H1 and RBM7 in a RNase-insensitive manner. Interacts with EXOSC10; the interaction mediates the association of MTREX with nuclear RNA exosomes. Interacts with isoform 1 of NVL in an ATP-dependent manner; the interaction is required to associate NVL with nuclear RNA exosome. Interacts with WDR74; the interaction dissociation in a late stage of rRNA synthesis is required for appropriate maturation of pre-60S particles and depends on the ATPase activity of NVL. Interacts with MPHOSPH6. Interacts with the RNA cap-binding complex proteins NCBP1 and SRRT. Interacts with NRDE2; the interaction is direct and negatively regulates MTREX function in exosomal degradation by changing its conformation precluding interaction with ZFC3H1, the RNA cap-binding complex proteins NCBP1 and SRRT, and association with the exosome. Associates with the RNA exosome complex.

Its subcellular location is the nucleus. The protein resides in the nucleoplasm. It is found in the nucleolus. It localises to the nucleus speckle. The enzyme catalyses ATP + H2O = ADP + phosphate + H(+). With respect to regulation, activated when MTREX is incorporated into NEXT complex an the nuclear RNA exosome complex. In terms of biological role, catalyzes the ATP-dependent unwinding of RNA duplexes with a single-stranded 3' RNA extension. Central subunit of many protein complexes, namely TRAMP-like, nuclear exosome targeting (NEXT) and poly(A) tail exosome targeting (PAXT). NEXT functions as an RNA exosome cofactor that directs a subset of non-coding short-lived RNAs for exosomal degradation. NEXT is involved in surveillance and turnover of aberrant transcripts and non-coding RNAs. PAXT directs a subset of long and polyadenylated poly(A) RNAs for exosomal degradation. The RNA exosome is fundamental for the degradation of RNA in eukaryotic nuclei. Substrate targeting is facilitated by its cofactor ZCCHC8, which links to RNA-binding protein adapters. Associated with the RNA exosome complex and involved in the 3'-processing of the 7S pre-RNA to the mature 5.8S rRNA. May be involved in pre-mRNA splicing. In the context of NEXT complex can also in vitro unwind DNA:RNA heteroduplexes with a 3' poly (A) RNA tracking strand. Can promote unwinding and degradation of structured RNA substrates when associated with the nuclear exosome and its cofactors. Can displace a DNA strand while translocating on RNA to ultimately degrade the RNA within a DNA/RNA heteroduplex. Plays a role in DNA damage response. The chain is Exosome RNA helicase MTR4 from Mus musculus (Mouse).